An 81-amino-acid polypeptide reads, in one-letter code: Protein Vpu (81 aa).

The Extracellular portion of the chain corresponds to 1 to 7; the sequence is MQSLQVL. Residues 8 to 28 form a helical membrane-spanning segment; that stretch reads AIVALVVATIIAIVVWTIVFI. At 29-81 the chain is on the cytoplasmic side; sequence EYRKILRQRKIDRLINRITERAEDSGNESDGDQEELSALVERGHLAPWDVDDL. Residues 50 to 81 form a disordered region; that stretch reads AEDSGNESDGDQEELSALVERGHLAPWDVDDL. Ser-53 and Ser-57 each carry phosphoserine; by host CK2. A compositionally biased stretch (acidic residues) spans 53–63; sequence SGNESDGDQEE.

The protein belongs to the HIV-1 VPU protein family. In terms of assembly, homopentamer. Interacts with host CD4 and BRTC; these interactions induce proteasomal degradation of CD4. Interacts with host BST2; this interaction leads to the degradation of host BST2. Interacts with host FBXW11. Interacts with host AP1M1; this interaction plays a role in the mistrafficking and subsequent degradation of host BST2. Interacts with host RANBP2; this interaction allows Vpu to down-regulate host BLM sumoylation. Phosphorylated by host CK2. This phosphorylation is necessary for interaction with human BTRC and degradation of CD4.

It localises to the host membrane. Ion channel activity is inhibited by hexamethylene amiloride in vitro. In terms of biological role, enhances virion budding by targeting host CD4 and Tetherin/BST2 to proteasome degradation. Degradation of CD4 prevents any unwanted premature interactions between viral Env and its host receptor CD4 in the endoplasmic reticulum. Degradation of antiretroviral protein Tetherin/BST2 is important for virion budding, as BST2 tethers new viral particles to the host cell membrane. Mechanistically, Vpu bridges either CD4 or BST2 to BTRC, a substrate recognition subunit of the Skp1/Cullin/F-box protein E3 ubiquitin ligase, induces their ubiquitination and subsequent proteasomal degradation. The alteration of the E3 ligase specificity by Vpu seems to promote the degradation of host IKBKB, leading to NF-kappa-B down-regulation and subsequent apoptosis. Acts as a viroporin that forms an oligomeric ion channel in membranes. Modulates the host DNA repair mechanisms to promote degradation of nuclear viral cDNA in cells that are already productively infected in order to suppress immune sensing and proviral hyper-integration (superinfection). Manipulates PML-NBs and modulates SUMOylation of host BLM protein thereby enhancing its DNA-end processing activity toward viral unintegrated linear DNA. Also inhibits RAD52-mediated homologous repair of viral cDNA, preventing the generation of dead-end circular forms of single copies of the long terminal repeat and permitting sustained nucleolytic attack. This is Protein Vpu from Human immunodeficiency virus type 1 group M subtype B (isolate YU-2) (HIV-1).